The sequence spans 94 residues: Large ribosomal subunit protein bL25 (94 aa).

The protein belongs to the bacterial ribosomal protein bL25 family. Part of the 50S ribosomal subunit; part of the 5S rRNA/L5/L18/L25 subcomplex. Contacts the 5S rRNA. Binds to the 5S rRNA independently of L5 and L18.

Functionally, this is one of the proteins that binds to the 5S RNA in the ribosome where it forms part of the central protuberance. The polypeptide is Large ribosomal subunit protein bL25 (Enterobacter sp. (strain 638)).